Reading from the N-terminus, the 495-residue chain is N-succinylglutamate 5-semialdehyde dehydrogenase (495 aa).

228-233 (GSYATG) provides a ligand contact to NAD(+). Catalysis depends on residues E251 and C285.

The protein belongs to the aldehyde dehydrogenase family. AstD subfamily.

It carries out the reaction N-succinyl-L-glutamate 5-semialdehyde + NAD(+) + H2O = N-succinyl-L-glutamate + NADH + 2 H(+). Its pathway is amino-acid degradation; L-arginine degradation via AST pathway; L-glutamate and succinate from L-arginine: step 4/5. In terms of biological role, catalyzes the NAD-dependent reduction of succinylglutamate semialdehyde into succinylglutamate. The chain is N-succinylglutamate 5-semialdehyde dehydrogenase from Legionella pneumophila (strain Paris).